The sequence spans 190 residues: Protein GrpE (190 aa).

Basic and acidic residues predominate over residues 1–31 (MTEEQKKYEDAENLESKSENPEEASAEKSEN). A disordered region spans residues 1 to 39 (MTEEQKKYEDAENLESKSENPEEASAEKSENGVEDLQAE).

The protein belongs to the GrpE family. Homodimer.

The protein resides in the cytoplasm. Its function is as follows. Participates actively in the response to hyperosmotic and heat shock by preventing the aggregation of stress-denatured proteins, in association with DnaK and GrpE. It is the nucleotide exchange factor for DnaK and may function as a thermosensor. Unfolded proteins bind initially to DnaJ; upon interaction with the DnaJ-bound protein, DnaK hydrolyzes its bound ATP, resulting in the formation of a stable complex. GrpE releases ADP from DnaK; ATP binding to DnaK triggers the release of the substrate protein, thus completing the reaction cycle. Several rounds of ATP-dependent interactions between DnaJ, DnaK and GrpE are required for fully efficient folding. The sequence is that of Protein GrpE from Zymomonas mobilis subsp. mobilis (strain ATCC 31821 / ZM4 / CP4).